Reading from the N-terminus, the 148-residue chain is Photosystem I reaction center subunit XI (148 aa).

A run of 3 helical transmembrane segments spans residues 48–68, 73–93, and 122–142; these read LEIG…LGPL, IGLL…TLGL, and GGFF…LSSI.

Belongs to the PsaL family.

It is found in the plastid. The protein localises to the chloroplast thylakoid membrane. The sequence is that of Photosystem I reaction center subunit XI from Thalassiosira pseudonana (Marine diatom).